The following is a 125-amino-acid chain: Methylglyoxal synthase (125 aa).

The 125-residue stretch at 1 to 125 folds into the MGS-like domain; that stretch reads MTQRLRIALI…TAEKLVRALD (125 aa). Substrate is bound by residues H12, K16, 38–41, and 59–60; these read TGTT and SG. D65 functions as the Proton donor/acceptor in the catalytic mechanism. Residue H92 participates in substrate binding.

The protein belongs to the methylglyoxal synthase family.

It catalyses the reaction dihydroxyacetone phosphate = methylglyoxal + phosphate. Its function is as follows. Catalyzes the formation of methylglyoxal from dihydroxyacetone phosphate. The sequence is that of Methylglyoxal synthase from Brucella abortus (strain S19).